The sequence spans 373 residues: Peptide chain release factor 2 (373 aa).

Gln-252 is subject to N5-methylglutamine.

This sequence belongs to the prokaryotic/mitochondrial release factor family. In terms of processing, methylated by PrmC. Methylation increases the termination efficiency of RF2.

Its subcellular location is the cytoplasm. Functionally, peptide chain release factor 2 directs the termination of translation in response to the peptide chain termination codons UGA and UAA. This is Peptide chain release factor 2 from Staphylococcus saprophyticus subsp. saprophyticus (strain ATCC 15305 / DSM 20229 / NCIMB 8711 / NCTC 7292 / S-41).